Consider the following 67-residue polypeptide: Small ribosomal subunit protein eS17 (67 aa).

It belongs to the eukaryotic ribosomal protein eS17 family.

The chain is Small ribosomal subunit protein eS17 from Pyrococcus abyssi (strain GE5 / Orsay).